Reading from the N-terminus, the 248-residue chain is 3-deoxy-manno-octulosonate cytidylyltransferase (248 aa).

The protein belongs to the KdsB family.

It is found in the cytoplasm. It catalyses the reaction 3-deoxy-alpha-D-manno-oct-2-ulosonate + CTP = CMP-3-deoxy-beta-D-manno-octulosonate + diphosphate. Its pathway is nucleotide-sugar biosynthesis; CMP-3-deoxy-D-manno-octulosonate biosynthesis; CMP-3-deoxy-D-manno-octulosonate from 3-deoxy-D-manno-octulosonate and CTP: step 1/1. It participates in bacterial outer membrane biogenesis; lipopolysaccharide biosynthesis. Functionally, activates KDO (a required 8-carbon sugar) for incorporation into bacterial lipopolysaccharide in Gram-negative bacteria. The chain is 3-deoxy-manno-octulosonate cytidylyltransferase from Leptospira interrogans serogroup Icterohaemorrhagiae serovar copenhageni (strain Fiocruz L1-130).